A 326-amino-acid chain; its full sequence is WD repeat-containing protein slr1409 (326 aa).

6 WD repeats span residues 47-77, 88-118, 129-159, 169-199, 210-240, and 252-282; these read GSDV…TLWT, GQKP…RLWN, PHRA…KIFT, LKSG…HLIN, TGQG…KLWN, and VPTG…RFWQ.

This Synechocystis sp. (strain ATCC 27184 / PCC 6803 / Kazusa) protein is WD repeat-containing protein slr1409.